A 156-amino-acid chain; its full sequence is Egg-lysin (156 aa).

The N-terminal stretch at 1–18 (MKLLVLCVFAMMATLAVS) is a signal peptide.

In terms of assembly, monomer. Homodimer. Molecules associate into dimers and then rapidly dissociate again. Interacts (as a monomer) with the egg vitelline layer protein VERL (via VERL repeats); each VERL chain can bind multiple copies of lysin. Sperm.

It is found in the cytoplasmic vesicle. The protein localises to the secretory vesicle. It localises to the acrosome lumen. Its function is as follows. Creates a 3 um hole in the egg vitelline layer through which the sperm passes. Does not have enzyme activity. Species-specific interaction between the sperm protein lysin and the egg protein VERL exposes a basic surface on lysin that may dissociate the egg vitelline layer via electrostatic repulsion. Plays a role in ensuring species-specific fertilization. In Haliotis cracherodii (Black abalone), this protein is Egg-lysin.